Here is a 471-residue protein sequence, read N- to C-terminus: Adenosylhomocysteinase (471 aa).

The substrate site is built by T60, D135, and E196. An NAD(+)-binding site is contributed by 197–199 (TTT). The substrate site is built by K226 and D230. Residues N231, 260–265 (GYGDVG), E283, N318, 339–341 (IGH), and N387 contribute to the NAD(+) site.

The protein belongs to the adenosylhomocysteinase family. The cofactor is NAD(+).

It is found in the cytoplasm. It carries out the reaction S-adenosyl-L-homocysteine + H2O = L-homocysteine + adenosine. Its pathway is amino-acid biosynthesis; L-homocysteine biosynthesis; L-homocysteine from S-adenosyl-L-homocysteine: step 1/1. In terms of biological role, may play a key role in the regulation of the intracellular concentration of adenosylhomocysteine. The sequence is that of Adenosylhomocysteinase from Chlorobium phaeobacteroides (strain DSM 266 / SMG 266 / 2430).